The sequence spans 274 residues: uncharacterized protein (274 aa).

This is an uncharacterized protein from Acidianus hospitalis (AFV-1).